We begin with the raw amino-acid sequence, 153 residues long: Cytochrome c-type biogenesis protein CcmE (153 aa).

Over 1–8 (MTPVQRRR) the chain is Cytoplasmic. A helical; Signal-anchor for type II membrane protein membrane pass occupies residues 9-29 (LVWVLLALLASGLATALVAMA). The Periplasmic segment spans residues 30–153 (LERNIAYLYT…DVPVTAPEVR (124 aa)). The heme site is built by His-123 and Tyr-127.

The protein belongs to the CcmE/CycJ family.

It localises to the cell inner membrane. Functionally, heme chaperone required for the biogenesis of c-type cytochromes. Transiently binds heme delivered by CcmC and transfers the heme to apo-cytochromes in a process facilitated by CcmF and CcmH. The polypeptide is Cytochrome c-type biogenesis protein CcmE (Stenotrophomonas maltophilia (strain R551-3)).